Consider the following 115-residue polypeptide: Large ribosomal subunit protein bL20 (115 aa).

Belongs to the bacterial ribosomal protein bL20 family.

Its function is as follows. Binds directly to 23S ribosomal RNA and is necessary for the in vitro assembly process of the 50S ribosomal subunit. It is not involved in the protein synthesizing functions of that subunit. This is Large ribosomal subunit protein bL20 from Borrelia turicatae (strain 91E135).